Here is a 125-residue protein sequence, read N- to C-terminus: Protein ApaG (125 aa).

The ApaG domain occupies 1–125 (MNDTPRVCVQ…FRLAIATHIH (125 aa)).

The protein is Protein ApaG of Erwinia tasmaniensis (strain DSM 17950 / CFBP 7177 / CIP 109463 / NCPPB 4357 / Et1/99).